The chain runs to 80 residues: Acyl carrier protein (80 aa).

The 76-residue stretch at 4-79 folds into the Carrier domain; the sequence is EDIFSKVKDI…DAVDFIASKA (76 aa). Position 39 is an O-(pantetheine 4'-phosphoryl)serine (Ser-39).

This sequence belongs to the acyl carrier protein (ACP) family. Post-translationally, 4'-phosphopantetheine is transferred from CoA to a specific serine of apo-ACP by AcpS. This modification is essential for activity because fatty acids are bound in thioester linkage to the sulfhydryl of the prosthetic group.

The protein localises to the cytoplasm. It functions in the pathway lipid metabolism; fatty acid biosynthesis. Carrier of the growing fatty acid chain in fatty acid biosynthesis. This Synechococcus elongatus (strain ATCC 33912 / PCC 7942 / FACHB-805) (Anacystis nidulans R2) protein is Acyl carrier protein.